The primary structure comprises 104 residues: N(4)-acetylcytidine amidohydrolase (104 aa).

The ASCH domain occupies 6 to 94 (ITFFQRFQND…IAEIYPNQTQ (89 aa)). Catalysis depends on lysine 21, which acts as the Proton acceptor. The active-site Nucleophile is the threonine 24. Glutamate 74 serves as the catalytic Proton donor.

It belongs to the N(4)-acetylcytidine amidohydrolase family.

It catalyses the reaction N(4)-acetylcytidine + H2O = cytidine + acetate + H(+). The enzyme catalyses N(4)-acetyl-2'-deoxycytidine + H2O = 2'-deoxycytidine + acetate + H(+). The catalysed reaction is N(4)-acetylcytosine + H2O = cytosine + acetate + H(+). Its function is as follows. Catalyzes the hydrolysis of N(4)-acetylcytidine (ac4C). The protein is N(4)-acetylcytidine amidohydrolase (yqfB) of Salmonella dublin (strain CT_02021853).